Consider the following 102-residue polypeptide: Citrate lyase acyl carrier protein (102 aa).

The residue at position 14 (serine 14) is an O-(phosphoribosyl dephospho-coenzyme A)serine.

It belongs to the CitD family. In terms of assembly, oligomer with a subunit composition of (alpha,beta,gamma)6.

The protein resides in the cytoplasm. Covalent carrier of the coenzyme of citrate lyase. The protein is Citrate lyase acyl carrier protein of Streptococcus mutans serotype c (strain ATCC 700610 / UA159).